Reading from the N-terminus, the 361-residue chain is Chorismate synthase (361 aa).

Position 47 (Arg47) interacts with NADP(+). Residues Arg124–Ser126, Gly286, Lys301–Thr305, and Arg327 each bind FMN.

This sequence belongs to the chorismate synthase family. As to quaternary structure, homotetramer. FMNH2 serves as cofactor.

It catalyses the reaction 5-O-(1-carboxyvinyl)-3-phosphoshikimate = chorismate + phosphate. It participates in metabolic intermediate biosynthesis; chorismate biosynthesis; chorismate from D-erythrose 4-phosphate and phosphoenolpyruvate: step 7/7. Catalyzes the anti-1,4-elimination of the C-3 phosphate and the C-6 proR hydrogen from 5-enolpyruvylshikimate-3-phosphate (EPSP) to yield chorismate, which is the branch point compound that serves as the starting substrate for the three terminal pathways of aromatic amino acid biosynthesis. This reaction introduces a second double bond into the aromatic ring system. This Prochlorococcus marinus (strain NATL2A) protein is Chorismate synthase.